A 1563-amino-acid polypeptide reads, in one-letter code: Pentafunctional AROM polypeptide (1563 aa).

Residues 1 to 382 (MAEPISNPTR…YEPKASVVED (382 aa)) form a 3-dehydroquinate synthase region. NAD(+) contacts are provided by residues 48 to 50 (DTN), 82 to 85 (EYSK), 113 to 115 (GGV), and Asp118. Residue Arg129 coordinates 7-phospho-2-dehydro-3-deoxy-D-arabino-heptonate. 138–139 (TT) lines the NAD(+) pocket. Residues Asp145 and Lys151 each coordinate 7-phospho-2-dehydro-3-deoxy-D-arabino-heptonate. Lys160 serves as a coordination point for NAD(+). A 7-phospho-2-dehydro-3-deoxy-D-arabino-heptonate-binding site is contributed by Asn161. NAD(+) contacts are provided by residues 178–181 (FLNT) and Asn189. Glu193 serves as a coordination point for Zn(2+). Residues 193-196 (EVIK) and Lys248 contribute to the 7-phospho-2-dehydro-3-deoxy-D-arabino-heptonate site. Glu258 acts as the Proton acceptor; for 3-dehydroquinate synthase activity in catalysis. 7-phospho-2-dehydro-3-deoxy-D-arabino-heptonate-binding positions include 262-266 (RNLLN) and His269. His269 is a binding site for Zn(2+). His273 (proton acceptor; for 3-dehydroquinate synthase activity) is an active-site residue. The 7-phospho-2-dehydro-3-deoxy-D-arabino-heptonate site is built by His285 and Lys354. Position 285 (His285) interacts with Zn(2+). The tract at residues 395 to 834 (VFAGVPKDLN…WDTMSNYFKV (440 aa)) is EPSP synthase. The active-site For EPSP synthase activity is Cys816. The interval 857 to 1051 (PKSIFIIGMR…KKKPHSFFVS (195 aa)) is shikimate kinase. Residue 864 to 871 (GMRGAGKS) coordinates ATP. The interval 1052-1265 (LTVPNVSKAL…AAPGQLSAAE (214 aa)) is 3-dehydroquinase. The active-site Proton acceptor; for 3-dehydroquinate dehydratase activity is the His1168. Lys1196 (schiff-base intermediate with substrate; for 3-dehydroquinate dehydratase activity) is an active-site residue. Positions 1278–1563 (PRSFHLFGNP…TDAQAAVMGN (286 aa)) are shikimate dehydrogenase.

In the N-terminal section; belongs to the sugar phosphate cyclases superfamily. Dehydroquinate synthase family. The protein in the 2nd section; belongs to the EPSP synthase family. It in the 3rd section; belongs to the shikimate kinase family. This sequence in the 4th section; belongs to the type-I 3-dehydroquinase family. In the C-terminal section; belongs to the shikimate dehydrogenase family. Homodimer. The cofactor is Zn(2+).

The protein localises to the cytoplasm. It catalyses the reaction 7-phospho-2-dehydro-3-deoxy-D-arabino-heptonate = 3-dehydroquinate + phosphate. The enzyme catalyses 3-dehydroquinate = 3-dehydroshikimate + H2O. It carries out the reaction shikimate + NADP(+) = 3-dehydroshikimate + NADPH + H(+). The catalysed reaction is shikimate + ATP = 3-phosphoshikimate + ADP + H(+). It catalyses the reaction 3-phosphoshikimate + phosphoenolpyruvate = 5-O-(1-carboxyvinyl)-3-phosphoshikimate + phosphate. Its pathway is metabolic intermediate biosynthesis; chorismate biosynthesis; chorismate from D-erythrose 4-phosphate and phosphoenolpyruvate: step 2/7. It functions in the pathway metabolic intermediate biosynthesis; chorismate biosynthesis; chorismate from D-erythrose 4-phosphate and phosphoenolpyruvate: step 3/7. It participates in metabolic intermediate biosynthesis; chorismate biosynthesis; chorismate from D-erythrose 4-phosphate and phosphoenolpyruvate: step 4/7. The protein operates within metabolic intermediate biosynthesis; chorismate biosynthesis; chorismate from D-erythrose 4-phosphate and phosphoenolpyruvate: step 5/7. Its pathway is metabolic intermediate biosynthesis; chorismate biosynthesis; chorismate from D-erythrose 4-phosphate and phosphoenolpyruvate: step 6/7. The AROM polypeptide catalyzes 5 consecutive enzymatic reactions in prechorismate polyaromatic amino acid biosynthesis. The protein is Pentafunctional AROM polypeptide of Neurospora crassa (strain ATCC 24698 / 74-OR23-1A / CBS 708.71 / DSM 1257 / FGSC 987).